The sequence spans 164 residues: Putative Cys-tRNA(Pro)/Cys-tRNA(Cys) deacylase EbsC (164 aa).

It belongs to the prolyl-tRNA editing family. YbaK/EbsC subfamily.

In terms of biological role, affects the expression of the receptor, named binding substance, that mediates mating aggregate formation. Could be a regulatory protein that suppresses the function or expression of ebsA and/or ebsMB. The chain is Putative Cys-tRNA(Pro)/Cys-tRNA(Cys) deacylase EbsC from Enterococcus faecalis (strain ATCC 700802 / V583).